Consider the following 434-residue polypeptide: Guanosine-inosine kinase (434 aa).

GMP-binding positions include 40 to 45 (DQTLVD), 93 to 97 (GTIGN), and Arg-198. ATP contacts are provided by residues 284–289 (TAGPIG), Gly-357, and Asn-402.

This sequence belongs to the carbohydrate kinase PfkB family. It depends on Mg(2+) as a cofactor.

The enzyme catalyses guanosine + ATP = GMP + ADP + H(+). The catalysed reaction is inosine + ATP = IMP + ADP + H(+). Its pathway is purine metabolism; IMP biosynthesis via salvage pathway; IMP from inosine: step 1/1. It participates in purine metabolism; GMP biosynthesis via salvage pathway. Its function is as follows. Catalyzes the phosphorylation of guanosine and inosine to GMP and IMP, respectively. The protein is Guanosine-inosine kinase of Escherichia coli O157:H7.